We begin with the raw amino-acid sequence, 138 residues long: Basic phospholipase A2 homolog Tbo-K49 (138 aa).

An N-terminal signal peptide occupies residues 1–16 (MRTLWIMAVLLVGVEG). 6 cysteine pairs are disulfide-bonded: Cys-42-Cys-131, Cys-44-Cys-60, Cys-59-Cys-111, Cys-65-Cys-138, Cys-66-Cys-104, and Cys-91-Cys-102. The tract at residues 121–133 (KKERINTKIFCKK) is important for membrane-damaging activities in eukaryotes and bacteria; heparin-binding.

In terms of assembly, monomer. In terms of tissue distribution, expressed by the venom gland.

It localises to the secreted. In terms of biological role, snake venom phospholipase A2 homolog that lacks catalytic activity. It induces local edema. Is myotoxic. A model of myotoxic mechanism has been proposed: an apo Lys49-PLA2 is activated by the entrance of a hydrophobic molecule (e.g. fatty acid) at the hydrophobic channel of the protein leading to a reorientation of a monomer. This reorientation causes a transition between 'inactive' to 'active' states, causing alignment of C-terminal and membrane-docking sites (MDoS) side-by-side and putting the membrane-disruption sites (MDiS) in the same plane, exposed to solvent and in a symmetric position for both monomers. The MDoS region stabilizes the toxin on membrane by the interaction of charged residues with phospholipid head groups. Subsequently, the MDiS region destabilizes the membrane with penetration of hydrophobic residues. This insertion causes a disorganization of the membrane, allowing an uncontrolled influx of ions (i.e. calcium and sodium), and eventually triggering irreversible intracellular alterations and cell death. This chain is Basic phospholipase A2 homolog Tbo-K49, found in Craspedocephalus borneensis (Borneo pit viper).